The chain runs to 298 residues: Glutamyl-Q tRNA(Asp) synthetase (298 aa).

L-glutamate contacts are provided by residues 9–13 (RFAPS) and Glu-45. A 'HIGH' region motif is present at residues 12–22 (PSPSGELHFGS). Cys-101, Cys-103, Tyr-115, and Cys-119 together coordinate Zn(2+). L-glutamate is bound by residues Tyr-172 and Arg-190. A 'KMSKS' region motif is present at residues 228 to 232 (KLSKQ). Lys-231 serves as a coordination point for ATP.

It belongs to the class-I aminoacyl-tRNA synthetase family. GluQ subfamily. Requires Zn(2+) as cofactor.

Its function is as follows. Catalyzes the tRNA-independent activation of glutamate in presence of ATP and the subsequent transfer of glutamate onto a tRNA(Asp). Glutamate is transferred on the 2-amino-5-(4,5-dihydroxy-2-cyclopenten-1-yl) moiety of the queuosine in the wobble position of the QUC anticodon. This Salmonella typhi protein is Glutamyl-Q tRNA(Asp) synthetase.